Consider the following 140-residue polypeptide: Large ribosomal subunit protein uL11 (140 aa).

It belongs to the universal ribosomal protein uL11 family. Part of the ribosomal stalk of the 50S ribosomal subunit. Interacts with L10 and the large rRNA to form the base of the stalk. L10 forms an elongated spine to which L12 dimers bind in a sequential fashion forming a multimeric L10(L12)X complex. In terms of processing, one or more lysine residues are methylated.

Its function is as follows. Forms part of the ribosomal stalk which helps the ribosome interact with GTP-bound translation factors. This Campylobacter hominis (strain ATCC BAA-381 / DSM 21671 / CCUG 45161 / LMG 19568 / NCTC 13146 / CH001A) protein is Large ribosomal subunit protein uL11.